The chain runs to 270 residues: MTFIDQLNAAWQKNNSLLCVGLDPDPAKFPAHLKGRDDKIFEFCAAIVDATADLVCSFKPQIAYFAARRAEDQLEALIAHIHEKHPGIPVILDAKRGDIGSTAEQYAVEAFERFKADAVTVNPYMGRDSVDPYLAYPDKGVILLCRTSNPGGSDLQFLDVGGEKLYERVARLASGEWNSSGQISLVVGATFPAEIARVREIVGDVPLLVPGIGAQGGDIEATVRAGRTANGTGLMINSSRAILYAGKDERFAAAARQVALETRDAINLYR.

K95 (proton donor) is an active-site residue.

The protein belongs to the OMP decarboxylase family. Type 2 subfamily.

It carries out the reaction orotidine 5'-phosphate + H(+) = UMP + CO2. The protein operates within pyrimidine metabolism; UMP biosynthesis via de novo pathway; UMP from orotate: step 2/2. The chain is Orotidine 5'-phosphate decarboxylase from Dechloromonas aromatica (strain RCB).